Reading from the N-terminus, the 22-residue chain is Brevinin-1OKd (22 aa).

K22 bears the Lysine amide mark.

In terms of tissue distribution, expressed by the skin glands.

The protein resides in the secreted. Functionally, antimicrobial peptide. In Nidirana okinavana (Kampira Falls frog), this protein is Brevinin-1OKd.